The following is a 204-amino-acid chain: Peptidyl-tRNA hydrolase (204 aa).

Tyr-19 is a binding site for tRNA. The active-site Proton acceptor is the His-24. TRNA is bound by residues Tyr-70, Asn-72, and Asn-118.

The protein belongs to the PTH family. As to quaternary structure, monomer.

The protein resides in the cytoplasm. The enzyme catalyses an N-acyl-L-alpha-aminoacyl-tRNA + H2O = an N-acyl-L-amino acid + a tRNA + H(+). Its function is as follows. Hydrolyzes ribosome-free peptidyl-tRNAs (with 1 or more amino acids incorporated), which drop off the ribosome during protein synthesis, or as a result of ribosome stalling. Functionally, catalyzes the release of premature peptidyl moieties from peptidyl-tRNA molecules trapped in stalled 50S ribosomal subunits, and thus maintains levels of free tRNAs and 50S ribosomes. This Prochlorococcus marinus (strain SARG / CCMP1375 / SS120) protein is Peptidyl-tRNA hydrolase.